We begin with the raw amino-acid sequence, 225 residues long: ATP phosphoribosyltransferase (225 aa).

This sequence belongs to the ATP phosphoribosyltransferase family. Short subfamily. As to quaternary structure, heteromultimer composed of HisG and HisZ subunits.

The protein localises to the cytoplasm. It carries out the reaction 1-(5-phospho-beta-D-ribosyl)-ATP + diphosphate = 5-phospho-alpha-D-ribose 1-diphosphate + ATP. Its pathway is amino-acid biosynthesis; L-histidine biosynthesis; L-histidine from 5-phospho-alpha-D-ribose 1-diphosphate: step 1/9. In terms of biological role, catalyzes the condensation of ATP and 5-phosphoribose 1-diphosphate to form N'-(5'-phosphoribosyl)-ATP (PR-ATP). Has a crucial role in the pathway because the rate of histidine biosynthesis seems to be controlled primarily by regulation of HisG enzymatic activity. The chain is ATP phosphoribosyltransferase from Herminiimonas arsenicoxydans.